The chain runs to 638 residues: Threonine--tRNA ligase 2 (638 aa).

The TGS domain occupies 1 to 64; it reads MSKHVHIQLP…EEDAELSIVT (64 aa). Positions 245–535 are catalytic; it reads DHRKLGKQLG…LIEHYGGAFP (291 aa). Zn(2+)-binding residues include Cys336, His387, and His512.

The protein belongs to the class-II aminoacyl-tRNA synthetase family. In terms of assembly, homodimer. Zn(2+) is required as a cofactor.

The protein localises to the cytoplasm. The enzyme catalyses tRNA(Thr) + L-threonine + ATP = L-threonyl-tRNA(Thr) + AMP + diphosphate + H(+). Its function is as follows. Catalyzes the attachment of threonine to tRNA(Thr) in a two-step reaction: L-threonine is first activated by ATP to form Thr-AMP and then transferred to the acceptor end of tRNA(Thr). Also edits incorrectly charged L-seryl-tRNA(Thr). The chain is Threonine--tRNA ligase 2 (thrZ) from Bacillus subtilis (strain 168).